The following is a 176-amino-acid chain: MARVLKAAAANAVGLFSRLQAPIPTVRASSTSQPLDQVTGSVWNLGRLNHVAIAVPDLEKAAAFYKNILGAQVSEAVPLPEHGVSVVFVNLGNTKMELLHPLGRDSPIAGFLQKNKAGGMHHICIEVDNINAAVMDLKKKKIRSLSEEVKIGAHGKPVIFLHPKDCGGVLVELEQA.

A mitochondrion-targeting transit peptide spans 1–36; it reads MARVLKAAAANAVGLFSRLQAPIPTVRASSTSQPLD. Positions 47-176 constitute a VOC domain; sequence RLNHVAIAVP…GGVLVELEQA (130 aa). His-50 contacts Co(2+). The residue at position 114 (Lys-114) is an N6-succinyllysine. A Co(2+)-binding site is contributed by His-122. Lys-150 is modified (N6-acetyllysine; alternate). The residue at position 150 (Lys-150) is an N6-succinyllysine; alternate. Glu-172 lines the Co(2+) pocket.

The protein belongs to the methylmalonyl-CoA epimerase family.

The protein resides in the mitochondrion. The enzyme catalyses (R)-methylmalonyl-CoA = (S)-methylmalonyl-CoA. Functionally, methylmalonyl-CoA epimerase involved in propionyl-CoA metabolism. This chain is Methylmalonyl-CoA epimerase, mitochondrial, found in Homo sapiens (Human).